The primary structure comprises 63 residues: Large ribosomal subunit protein uL29 (63 aa).

It belongs to the universal ribosomal protein uL29 family.

The chain is Large ribosomal subunit protein uL29 from Caulobacter vibrioides (strain ATCC 19089 / CIP 103742 / CB 15) (Caulobacter crescentus).